We begin with the raw amino-acid sequence, 452 residues long: Pup--protein ligase (452 aa).

Glutamate 9 serves as a coordination point for Mg(2+). Arginine 53 contributes to the ATP binding site. Mg(2+) is bound at residue tyrosine 55. Aspartate 57 (proton acceptor) is an active-site residue. Glutamate 63 provides a ligand contact to Mg(2+). 2 residues coordinate ATP: threonine 66 and tryptophan 419.

This sequence belongs to the Pup ligase/Pup deamidase family. Pup-conjugating enzyme subfamily.

The enzyme catalyses ATP + [prokaryotic ubiquitin-like protein]-L-glutamate + [protein]-L-lysine = ADP + phosphate + N(6)-([prokaryotic ubiquitin-like protein]-gamma-L-glutamyl)-[protein]-L-lysine.. The protein operates within protein degradation; proteasomal Pup-dependent pathway. It participates in protein modification; protein pupylation. Functionally, catalyzes the covalent attachment of the prokaryotic ubiquitin-like protein modifier Pup to the proteasomal substrate proteins, thereby targeting them for proteasomal degradation. This tagging system is termed pupylation. The ligation reaction involves the side-chain carboxylate of the C-terminal glutamate of Pup and the side-chain amino group of a substrate lysine. The sequence is that of Pup--protein ligase from Rhodococcus erythropolis (strain PR4 / NBRC 100887).